A 411-amino-acid polypeptide reads, in one-letter code: CinA-like protein (411 aa).

It belongs to the CinA family.

This Dictyoglomus thermophilum (strain ATCC 35947 / DSM 3960 / H-6-12) protein is CinA-like protein.